A 628-amino-acid polypeptide reads, in one-letter code: Hepatocyte nuclear factor 1-alpha (628 aa).

The segment at 1 to 31 is dimerization; the sequence is MVSKLSQLQTELLAALLESGLSKEALIQALG. The region spanning 1–32 is the HNF-p1 domain; it reads MVSKLSQLQTELLAALLESGLSKEALIQALGE. Positions 47–79 are disordered; the sequence is GESCGGTRGDLTELPNGLGETRGSEDDTDDDGE. Ser-70 carries the phosphoserine modification. Thr-74 carries the phosphothreonine modification. The POU-specific atypical domain maps to 87–182; sequence KELENLSPEE…VAQQFTHAGQ (96 aa). Ser-93 is subject to Phosphoserine. Lys-117 is covalently cross-linked (Glycyl lysine isopeptide (Lys-Gly) (interchain with G-Cter in ubiquitin)). 4 interaction with DNA regions span residues 130–132, 143–149, 155–158, and 203–206; these read QRE, HLSQHLN, KTQK, and RFKW. The tract at residues 183–205 is disordered; that stretch reads GGLIEEPTGDELPTKKGRRNRFK. Residues 197–205 carry the Nuclear localization signal motif; sequence KKGRRNRFK. The homeobox; HNF1-type DNA-binding region spans 199 to 279; that stretch reads GRRNRFKWGP…NRRKEEAFRH (81 aa). A Phosphoserine modification is found at Ser-247. Interaction with DNA regions lie at residues 263 to 265 and 270 to 273; these read RVY and NRRK. Disordered stretches follow at residues 284–338 and 541–585; these read DTYN…SSSG and FTSD…LSTS. Over residues 288 to 298 the composition is skewed to pro residues; that stretch reads GPPPGPGPGPA. At Ser-313 the chain carries Phosphoserine. Composition is skewed to polar residues over residues 324–338 and 558–575; these read QSATSEAAEVPSSSG and SPATTIHIPSQDPSNIQH.

It belongs to the HNF1 homeobox family. In terms of assembly, binds DNA as a dimer. Heterotetramer with PCBD1; formed by a dimer of dimers. Interacts with PCBD1. Interacts with BHLHE41. Interacts with NR5A2. Interacts with SPOP; this interaction promotes ubiquitination and degradation of HNF1A. Ubiquitinated in s SPOP-dependent manner; leading to prteasomal degradation. In terms of tissue distribution, liver.

The protein localises to the nucleus. Transcriptional activator that regulates the tissue specific expression of multiple genes, especially in pancreatic islet cells and in liver. Binds to the inverted palindrome 5'-GTTAATNATTAAC-3'. Activates the transcription of CYP1A2, CYP2E1 and CYP3A11. The protein is Hepatocyte nuclear factor 1-alpha (Hnf1a) of Rattus norvegicus (Rat).